The chain runs to 219 residues: Guanylate kinase (219 aa).

In terms of domain architecture, Guanylate kinase-like spans 15 to 194; that stretch reads GLMFVLSSPS…AFESVKAILR (180 aa). 22 to 29 lines the ATP pocket; the sequence is SPSGAGKT.

The protein belongs to the guanylate kinase family.

The protein resides in the cytoplasm. The catalysed reaction is GMP + ATP = GDP + ADP. Functionally, essential for recycling GMP and indirectly, cGMP. The protein is Guanylate kinase of Rhodopseudomonas palustris (strain BisB5).